A 368-amino-acid polypeptide reads, in one-letter code: Cobalt-precorrin-5B C(1)-methyltransferase (368 aa).

Belongs to the CbiD family.

It catalyses the reaction Co-precorrin-5B + S-adenosyl-L-methionine = Co-precorrin-6A + S-adenosyl-L-homocysteine. It functions in the pathway cofactor biosynthesis; adenosylcobalamin biosynthesis; cob(II)yrinate a,c-diamide from sirohydrochlorin (anaerobic route): step 6/10. In terms of biological role, catalyzes the methylation of C-1 in cobalt-precorrin-5B to form cobalt-precorrin-6A. This chain is Cobalt-precorrin-5B C(1)-methyltransferase, found in Synechococcus sp. (strain CC9605).